A 231-amino-acid polypeptide reads, in one-letter code: Peroxisomal membrane protein 11E (231 aa).

The Cytoplasmic portion of the chain corresponds to 1–91 (MTTLDLTRAE…LPLVLLGKSK (91 aa)). A helical membrane pass occupies residues 92–108 (NALLSTFLFLDQIVWLG). Over 109 to 202 (RSGIYKNKER…LLQLAPKTIS (94 aa)) the chain is Lumenal. A helical transmembrane segment spans residues 203 to 222 (PRVTGAFGFTTSLISCYQLL). The Cytoplasmic segment spans residues 223-231 (PSRPKLKTP).

This sequence belongs to the peroxin-11 family. As to quaternary structure, homooligomer. Interacts with ARC5 and FIS1B on peroxisomes. Expressed in leaves and developing siliques.

The protein resides in the peroxisome membrane. Functionally, involved in peroxisomal proliferation. Promotes peroxisomal duplication, aggregation or elongation without fission. This chain is Peroxisomal membrane protein 11E (PEX11E), found in Arabidopsis thaliana (Mouse-ear cress).